A 59-amino-acid polypeptide reads, in one-letter code: Large ribosomal subunit protein uL30 (59 aa).

The protein belongs to the universal ribosomal protein uL30 family. As to quaternary structure, part of the 50S ribosomal subunit.

This Macrococcus caseolyticus (strain JCSC5402) (Macrococcoides caseolyticum) protein is Large ribosomal subunit protein uL30.